A 143-amino-acid polypeptide reads, in one-letter code: Nucleoside diphosphate kinase (143 aa).

The ATP site is built by lysine 11, phenylalanine 59, arginine 87, threonine 93, arginine 104, and asparagine 114. The Pros-phosphohistidine intermediate role is filled by histidine 117.

This sequence belongs to the NDK family. In terms of assembly, homotetramer. The cofactor is Mg(2+).

The protein resides in the cytoplasm. The catalysed reaction is a 2'-deoxyribonucleoside 5'-diphosphate + ATP = a 2'-deoxyribonucleoside 5'-triphosphate + ADP. It carries out the reaction a ribonucleoside 5'-diphosphate + ATP = a ribonucleoside 5'-triphosphate + ADP. Its function is as follows. Major role in the synthesis of nucleoside triphosphates other than ATP. The ATP gamma phosphate is transferred to the NDP beta phosphate via a ping-pong mechanism, using a phosphorylated active-site intermediate. This chain is Nucleoside diphosphate kinase, found in Azotobacter vinelandii (strain DJ / ATCC BAA-1303).